The following is a 372-amino-acid chain: Chaperone protein DnaJ (372 aa).

The 65-residue stretch at 5–69 (DYYEVLGVSK…DKRKQYDQFG (65 aa)) folds into the J domain. A CR-type zinc finger spans residues 139-221 (GVDKIIELDL…CKGKGKYLER (83 aa)). Zn(2+) is bound by residues Cys152, Cys155, Cys169, Cys172, Cys195, Cys198, Cys209, and Cys212. CXXCXGXG motif repeat units follow at residues 152–159 (CSACFGSG), 169–176 (CNNCHGTG), 195–202 (CNVCNGAG), and 209–216 (CKNCKGKG).

Belongs to the DnaJ family. In terms of assembly, homodimer. It depends on Zn(2+) as a cofactor.

The protein resides in the cytoplasm. In terms of biological role, participates actively in the response to hyperosmotic and heat shock by preventing the aggregation of stress-denatured proteins and by disaggregating proteins, also in an autonomous, DnaK-independent fashion. Unfolded proteins bind initially to DnaJ; upon interaction with the DnaJ-bound protein, DnaK hydrolyzes its bound ATP, resulting in the formation of a stable complex. GrpE releases ADP from DnaK; ATP binding to DnaK triggers the release of the substrate protein, thus completing the reaction cycle. Several rounds of ATP-dependent interactions between DnaJ, DnaK and GrpE are required for fully efficient folding. Also involved, together with DnaK and GrpE, in the DNA replication of plasmids through activation of initiation proteins. The polypeptide is Chaperone protein DnaJ (Mycoplasma capricolum subsp. capricolum (strain California kid / ATCC 27343 / NCTC 10154)).